Consider the following 310-residue polypeptide: MRFFRSVDIDFIGNRYKFFTISGLLLLLTVGAFIYRGGLNYGIDFTGGILMRISFQNEVGLQDVRIAVEESGINSFELQSSGNLVMIRIKKDLEAQEEFETLIKSSIQLRFPDNPVKIEGIEYIGPTVGEYLSKQAVYAFLFAFLVMIVYVAFRFKSSLWGIVSVVGIIHDIVISLGFVILANKEINITIVAALLTVVGYSINDTIVLFDRIKENLKLLVKEDFVAVINKSINEVLVRTIVTSLTVFIVACSLFFFGGEVMHTFAYIMIIGTVLGVFSTIFVCAPLICEWRIKTNKRLKIAIKQDGVRSK.

Helical transmembrane passes span 18 to 38, 135 to 155, 162 to 182, 188 to 208, 240 to 260, and 267 to 287; these read FFTI…YRGG, QAVY…AFRF, IVSV…VILA, ITIV…TIVL, IVTS…GGEV, and IMII…APLI.

The protein belongs to the SecD/SecF family. SecF subfamily. In terms of assembly, forms a complex with SecD. Part of the essential Sec protein translocation apparatus which comprises SecA, SecYEG and auxiliary proteins SecDF. Other proteins may also be involved.

It is found in the cell inner membrane. Its function is as follows. Part of the Sec protein translocase complex. Interacts with the SecYEG preprotein conducting channel. SecDF uses the proton motive force (PMF) to complete protein translocation after the ATP-dependent function of SecA. This is Protein translocase subunit SecF from Endomicrobium trichonymphae.